The sequence spans 217 residues: Small ribosomal subunit protein uS3 (217 aa).

The KH type-2 domain occupies 40–110 (IRDLINKGFN…EVYINIHEVR (71 aa)).

Belongs to the universal ribosomal protein uS3 family. In terms of assembly, part of the 30S ribosomal subunit. Forms a tight complex with proteins S10 and S14.

In terms of biological role, binds the lower part of the 30S subunit head. Binds mRNA in the 70S ribosome, positioning it for translation. This chain is Small ribosomal subunit protein uS3, found in Rickettsia akari (strain Hartford).